The sequence spans 1396 residues: Major capsid protein (1396 aa).

Belongs to the herpesviridae major capsid protein family. Homomultimer. Makes the hexons and eleven out of twelve pentons. Interacts with triplex proteins 1/TRX1 and 2/TRX2; adjacent capsomers are linked together in groups of three by triplexes, heterotrimeric complexes composed of one molecule of TRX1 and two molecules of TRX2. Interacts with scaffold protein; this interaction allows efficient MCP transport to the host nucleus. Interacts with capsid vertex component 2/CVC2. Interacts with the small capsomere-interacting protein/SCP.

Its subcellular location is the virion. The protein resides in the host nucleus. In terms of biological role, self-assembles to form an icosahedral capsid with a T=16 symmetry, about 200 nm in diameter, and consisting of 150 hexons and 12 pentons (total of 162 capsomers). Hexons form the edges and faces of the capsid and are each composed of six MCP molecules. In contrast, one penton is found at each of the 12 vertices. Eleven of the pentons are MCP pentamers, while the last vertex is occupied by the portal complex. The capsid is surrounded by a layer of proteinaceous material designated the tegument which, in turn, is enclosed in an envelope of host cell-derived lipids containing virus-encoded glycoproteins. This chain is Major capsid protein, found in Varicella-zoster virus (strain Dumas) (HHV-3).